The sequence spans 226 residues: 2-C-methyl-D-erythritol 4-phosphate cytidylyltransferase (226 aa).

Belongs to the IspD/TarI cytidylyltransferase family. IspD subfamily.

The catalysed reaction is 2-C-methyl-D-erythritol 4-phosphate + CTP + H(+) = 4-CDP-2-C-methyl-D-erythritol + diphosphate. Its pathway is isoprenoid biosynthesis; isopentenyl diphosphate biosynthesis via DXP pathway; isopentenyl diphosphate from 1-deoxy-D-xylulose 5-phosphate: step 2/6. Functionally, catalyzes the formation of 4-diphosphocytidyl-2-C-methyl-D-erythritol from CTP and 2-C-methyl-D-erythritol 4-phosphate (MEP). This chain is 2-C-methyl-D-erythritol 4-phosphate cytidylyltransferase, found in Clostridium beijerinckii (strain ATCC 51743 / NCIMB 8052) (Clostridium acetobutylicum).